A 213-amino-acid chain; its full sequence is Ribosomal RNA small subunit methyltransferase G (213 aa).

S-adenosyl-L-methionine is bound by residues glycine 75, phenylalanine 80, 128–129, and arginine 144; that span reads IE.

This sequence belongs to the methyltransferase superfamily. RNA methyltransferase RsmG family.

It localises to the cytoplasm. The catalysed reaction is guanosine(527) in 16S rRNA + S-adenosyl-L-methionine = N(7)-methylguanosine(527) in 16S rRNA + S-adenosyl-L-homocysteine. Its function is as follows. Specifically methylates the N7 position of guanine in position 527 of 16S rRNA. The sequence is that of Ribosomal RNA small subunit methyltransferase G from Brucella anthropi (strain ATCC 49188 / DSM 6882 / CCUG 24695 / JCM 21032 / LMG 3331 / NBRC 15819 / NCTC 12168 / Alc 37) (Ochrobactrum anthropi).